A 396-amino-acid polypeptide reads, in one-letter code: NADH-quinone oxidoreductase subunit D 2 (396 aa).

The protein belongs to the complex I 49 kDa subunit family. As to quaternary structure, NDH-1 is composed of 14 different subunits. Subunits NuoB, C, D, E, F, and G constitute the peripheral sector of the complex.

It localises to the cell inner membrane. It carries out the reaction a quinone + NADH + 5 H(+)(in) = a quinol + NAD(+) + 4 H(+)(out). Its function is as follows. NDH-1 shuttles electrons from NADH, via FMN and iron-sulfur (Fe-S) centers, to quinones in the respiratory chain. The immediate electron acceptor for the enzyme in this species is believed to be ubiquinone. Couples the redox reaction to proton translocation (for every two electrons transferred, four hydrogen ions are translocated across the cytoplasmic membrane), and thus conserves the redox energy in a proton gradient. The sequence is that of NADH-quinone oxidoreductase subunit D 2 from Beijerinckia indica subsp. indica (strain ATCC 9039 / DSM 1715 / NCIMB 8712).